We begin with the raw amino-acid sequence, 198 residues long: Na(+)-translocating NADH-quinone reductase subunit E (198 aa).

6 helical membrane-spanning segments follow: residues 11-31 (SVFI…FLAV), 35-55 (VSTA…SVPV), 77-97 (FLNF…LEMI), 110-130 (GIFL…SFMV), 140-160 (VVYG…LAGI), and 176-196 (LGIT…FSGV).

This sequence belongs to the NqrDE/RnfAE family. As to quaternary structure, composed of six subunits; NqrA, NqrB, NqrC, NqrD, NqrE and NqrF.

The protein resides in the cell inner membrane. The enzyme catalyses a ubiquinone + n Na(+)(in) + NADH + H(+) = a ubiquinol + n Na(+)(out) + NAD(+). NQR complex catalyzes the reduction of ubiquinone-1 to ubiquinol by two successive reactions, coupled with the transport of Na(+) ions from the cytoplasm to the periplasm. NqrA to NqrE are probably involved in the second step, the conversion of ubisemiquinone to ubiquinol. This chain is Na(+)-translocating NADH-quinone reductase subunit E, found in Histophilus somni (strain 129Pt) (Haemophilus somnus).